The chain runs to 504 residues: Lysine--tRNA ligase (504 aa).

Mg(2+) contacts are provided by glutamate 411 and glutamate 418.

This sequence belongs to the class-II aminoacyl-tRNA synthetase family. As to quaternary structure, homodimer. Mg(2+) serves as cofactor.

The protein localises to the cytoplasm. It catalyses the reaction tRNA(Lys) + L-lysine + ATP = L-lysyl-tRNA(Lys) + AMP + diphosphate. The polypeptide is Lysine--tRNA ligase (Clostridium botulinum (strain Okra / Type B1)).